Here is a 226-residue protein sequence, read N- to C-terminus: MTVLVVTGTDTGVGKTVATAALACHARRAGIDVAVCKPVQTGTDDGDDDLAEVARLSGVTELAGLARYPRPLAPVAAAAAAGMALPSREQLLRFIGELDRPGRLTLVEGAGGLLVELGENGVTARDLAVALGAAVLVVVRPALGTLNHTALTLEALAAQGLSCAGLVIGAWPEHPGPVETSNRPALEALAPVRAVLPAGAAALAAAEFEAVSAGAFDRDWVTALAG.

12 to 17 (GVGKTV) is a binding site for ATP. Residue threonine 16 coordinates Mg(2+). The active site involves lysine 37. Threonine 41 provides a ligand contact to substrate. Residues aspartate 49, 108-111 (EGAG), and 197-199 (PAG) contribute to the ATP site. Aspartate 49 and glutamate 108 together coordinate Mg(2+).

It belongs to the dethiobiotin synthetase family. Homodimer. Mg(2+) is required as a cofactor.

It is found in the cytoplasm. The catalysed reaction is (7R,8S)-7,8-diammoniononanoate + CO2 + ATP = (4R,5S)-dethiobiotin + ADP + phosphate + 3 H(+). It functions in the pathway cofactor biosynthesis; biotin biosynthesis; biotin from 7,8-diaminononanoate: step 1/2. Functionally, catalyzes a mechanistically unusual reaction, the ATP-dependent insertion of CO2 between the N7 and N8 nitrogen atoms of 7,8-diaminopelargonic acid (DAPA, also called 7,8-diammoniononanoate) to form a ureido ring. This is ATP-dependent dethiobiotin synthetase BioD from Mycobacterium avium (strain 104).